Reading from the N-terminus, the 210-residue chain is Na(+)-translocating NADH-quinone reductase subunit D (210 aa).

The next 6 helical transmembrane spans lie at 14–34 (PIISNNPIALQILGVCSALAV), 42–62 (LVMTIALTAVTALSNLFISMI), 72–92 (IIVQMTIIASLVIVVDQVLQA), 103–123 (VFVGLIITNCIVMGRAEAYAM), 131–151 (FMDGIGNGLGYGAILLSVGFV), and 178–198 (NGLLLLPPSAFFLIASLIWII).

The protein belongs to the NqrDE/RnfAE family. In terms of assembly, composed of six subunits; NqrA, NqrB, NqrC, NqrD, NqrE and NqrF.

Its subcellular location is the cell inner membrane. It catalyses the reaction a ubiquinone + n Na(+)(in) + NADH + H(+) = a ubiquinol + n Na(+)(out) + NAD(+). In terms of biological role, NQR complex catalyzes the reduction of ubiquinone-1 to ubiquinol by two successive reactions, coupled with the transport of Na(+) ions from the cytoplasm to the periplasm. NqrA to NqrE are probably involved in the second step, the conversion of ubisemiquinone to ubiquinol. The protein is Na(+)-translocating NADH-quinone reductase subunit D of Shewanella loihica (strain ATCC BAA-1088 / PV-4).